The chain runs to 556 residues: Glucose-6-phosphate isomerase (556 aa).

Residue Glu-360 is the Proton donor of the active site. Catalysis depends on residues His-391 and Lys-519.

It belongs to the GPI family.

Its subcellular location is the cytoplasm. It carries out the reaction alpha-D-glucose 6-phosphate = beta-D-fructose 6-phosphate. The protein operates within carbohydrate biosynthesis; gluconeogenesis. It functions in the pathway carbohydrate degradation; glycolysis; D-glyceraldehyde 3-phosphate and glycerone phosphate from D-glucose: step 2/4. Functionally, catalyzes the reversible isomerization of glucose-6-phosphate to fructose-6-phosphate. This is Glucose-6-phosphate isomerase from Acinetobacter baumannii (strain SDF).